A 155-amino-acid chain; its full sequence is SsrA-binding protein (155 aa).

It belongs to the SmpB family.

It is found in the cytoplasm. Required for rescue of stalled ribosomes mediated by trans-translation. Binds to transfer-messenger RNA (tmRNA), required for stable association of tmRNA with ribosomes. tmRNA and SmpB together mimic tRNA shape, replacing the anticodon stem-loop with SmpB. tmRNA is encoded by the ssrA gene; the 2 termini fold to resemble tRNA(Ala) and it encodes a 'tag peptide', a short internal open reading frame. During trans-translation Ala-aminoacylated tmRNA acts like a tRNA, entering the A-site of stalled ribosomes, displacing the stalled mRNA. The ribosome then switches to translate the ORF on the tmRNA; the nascent peptide is terminated with the 'tag peptide' encoded by the tmRNA and targeted for degradation. The ribosome is freed to recommence translation, which seems to be the essential function of trans-translation. This is SsrA-binding protein from Streptococcus pyogenes serotype M5 (strain Manfredo).